The primary structure comprises 324 residues: UDP-galactose transporter homolog 1 (324 aa).

2 helical membrane passes run 7 to 27 (LVIAVCGIYATFLTWSLAQEP) and 42 to 62 (HSSFIVLCQALTAAVVGLCYL). N-linked (GlcNAc...) asparagine glycosylation is present at N97. The next 7 helical transmembrane spans lie at 106–126 (VGYMLAKSCKLLPIMLVHVLV), 135–155 (KALVGVLVSGGVALFTLGGAE), 161–181 (ASLYGLGMLLVSLFLDGLTNA), 199–219 (HLMVALNTAIVLWNLAYLVLF), 237–257 (ILTYLFTYCACGALGQCFVFF), 265–285 (LVLATVTVTRKMVSMLLSIVV), and 290–310 (VRPVQWLGILVVFGGIIWETV).

The protein belongs to the nucleotide-sugar transporter family. SLC35B subfamily.

The protein localises to the endoplasmic reticulum membrane. In terms of biological role, may be involved in specific transport of UDP-Gal from the cytosol to the Golgi lumen. Involved in the maintenance of optimal conditions for the folding of secretory pathway proteins in the endoplasmic reticulum. This chain is UDP-galactose transporter homolog 1 (HUT1), found in Eremothecium gossypii (strain ATCC 10895 / CBS 109.51 / FGSC 9923 / NRRL Y-1056) (Yeast).